A 229-amino-acid polypeptide reads, in one-letter code: Isopentenyl-diphosphate delta-isomerase (229 aa).

A substrate-binding site is contributed by Lys-39. Residues His-43 and His-54 each coordinate Mg(2+). In terms of domain architecture, Nudix hydrolase spans 52 to 202 (LLHRAFSMFI…QYGFTPWFKL (151 aa)). Substrate is bound by residues Gln-72 and Lys-77. Cys-89 is an active-site residue. Ser-90 contributes to the substrate binding site. Mg(2+) is bound by residues Glu-152 and Glu-154. Glu-154 is an active-site residue.

Belongs to the IPP isomerase type 1 family. It depends on Mg(2+) as a cofactor.

The protein localises to the cytoplasm. It is found in the nucleus. The enzyme catalyses isopentenyl diphosphate = dimethylallyl diphosphate. It participates in isoprenoid biosynthesis; dimethylallyl diphosphate biosynthesis; dimethylallyl diphosphate from isopentenyl diphosphate: step 1/1. In terms of biological role, isopentenyl-diphosphate delta-isomerase; part of the second module of ergosterol biosynthesis pathway that includes the middle steps of the pathway. Idi1 catalyzes the 1,3-allylic rearrangement of isopentenyl (IPP) to its highly electrophilic allylic isomer, dimethylallyl diphosphate (DMAPP). The second module is carried out in the vacuole and involves the formation of farnesyl diphosphate, which is also an important intermediate in the biosynthesis of ubiquinone, dolichol, heme and prenylated proteins. Activity by the mevalonate kinase erg12 first converts mevalonate into 5-phosphomevalonate. 5-phosphomevalonate is then further converted to 5-diphosphomevalonate by the phosphomevalonate kinase erg8. The diphosphomevalonate decarboxylase mvd1 then produces isopentenyl diphosphate. The isopentenyl-diphosphate delta-isomerase idi1 then catalyzes the 1,3-allylic rearrangement of the homoallylic substrate isopentenyl (IPP) to its highly electrophilic allylic isomer, dimethylallyl diphosphate (DMAPP). Finally the farnesyl diphosphate synthase fps1 catalyzes the sequential condensation of isopentenyl pyrophosphate with dimethylallyl pyrophosphate, and then with the resultant geranylpyrophosphate to the ultimate product farnesyl pyrophosphate. This Schizosaccharomyces pombe (strain 972 / ATCC 24843) (Fission yeast) protein is Isopentenyl-diphosphate delta-isomerase.